Consider the following 197-residue polypeptide: TM2 domain-containing protein 1 (197 aa).

The N-terminal stretch at 1-32 is a signal peptide; sequence MAFRWRSLMRFRSTTRLLLLFTFCLTVIHSLG. The Extracellular segment spans residues 33-105; the sequence is NDVDSCDKLH…GFNKTIPCRN (73 aa). N-linked (GlcNAc...) asparagine glycosylation is found at Asn-77, Asn-84, Asn-98, and Asn-105. The chain crosses the membrane as a helical span at residues 106–126; sequence VSGYSYKVAVALSLFLGWIGA. The 48-residue stretch at 108 to 155 folds into the TM2 domain; the sequence is GYSYKVAVALSLFLGWIGADRFYLGYPALGLLKFCTVGFCGIGSLVDF. The Cytoplasmic segment spans residues 127–143; that stretch reads DRFYLGYPALGLLKFCT. Residues 144–164 form a helical membrane-spanning segment; the sequence is VGFCGIGSLVDFMLISMQIVG. Residues 165-197 lie on the Extracellular side of the membrane; the sequence is PSDGSDYIVDYYGARLTRLSITNETYRRMQPSP. Asn-187 is a glycosylation site (N-linked (GlcNAc...) asparagine).

Belongs to the TM2 family.

The protein resides in the membrane. The protein is TM2 domain-containing protein 1 (tm2d1) of Danio rerio (Zebrafish).